Here is a 1337-residue protein sequence, read N- to C-terminus: MDFTAQPKPATALCGVVSADGKIAYPPGVKEITDKITTDEMIKRLKMVVKTFMDMDQDSEDEKQQYLPLALHLASEFFLRNPNKDVRLLVACCLADIFRIYAPEAPYTSHDKLKDIFLFITRQLKGLEDTKSPQFNRYFYLLENLAWVKSYNICFELEDCNEIFIQLFRTLFSVINNSHNKKVQMHMLDLMSSIIMEGDGVTQELLDSILINLIPAHKNLNKQSFDLAKVLLKRTVQTIEACIANFFNQVLVLGRSSVSDLSEHVFDLIQELFAIDPHLLLSVMPQLEFKLKSNDGEERLAVVRLLAKLFGSKDSDLATQNRPLWQCFLGRFNDIHVPVRLESVKFASHCLMNHPDLAKDLTEYLKVRSHDPEEAIRHDVIVTIITAAKRDLALVNDQLLGFVRERTLDKRWRVRKEAMMGLAQLYKKYCLHGEAGKEAAEKVSWIKDKLLHIYYQNSIDDKLLVEKIFAQYLVPHNLETEERMKCLYYLYASLDPNAVKALNEMWKCQNMLRSHVRELLDLHKQPTSEANCSAMFGKLMTIAKNLPDPGKAQDFVKKFNQVLGDDEKLRSQLELLISPTCSCKQADICVREIARKLANPKQPTNPFLEMVKFLLERIAPVHIDSEAISALVKLMNKSIEGTADDEEEGVSPDTAIRSGLELLKVLSFTHPTSFHSAETYESLLQCLRMEDDKVAEAAIQIFRNTGHKIETDLPQIRSTLIPILHQKAKRGTPHQAKQAVHCIHAIFTNKEVQLAQIFEPLSRSLNADVPEQLITPLVSLGHISMLAPDQFASPMKSVVANFIVKDLLMNDRSTGEKNGKLWSPDEEVSPEVLAKVQAIKLLVRWLLGMKNNQSKSANSTLRLLSAMLVSEGDLTEQKRISKSDMSRLRLAAGSAIMKLAQEPCYHEIITPEQFQLCALVINDECYQVRQIFAQKLHKALVKLLLPLEYMAIFALCAKDPVKERRAHARQCLLKNISIRREYIKQNPMATEKLLSLLPEYVVPYMIHLLAHDPDFTRSQDVDQLRDIKECLWFMLEVLMTKNENNSHAFMKKMAENIKLTRDAQSPDESKTNEKLYTVCDVALCVINSKSALCNADSPKDPVLPMKFFTQPEKDFCNDKSYISEETRVLLLTGKPKPAGVLGAVNKPLSATGRKPYVRSTGTETGSNINVNSELNPSTGNRSREQSSEAAETGVSENEENPVRIISVTPVKNIDPVKNKEINSDQATQGNISSDRGKKRTVTAAGAENIQQKTDEKVDESGPPAPSKPRRGRRPKSESQGNATKNDDLNKPINKGRKRAAVGQESPGGLEAGNAKAPKLQDLAKKAAPAERQIDLQR.

An N-acetylmethionine modification is found at Met-1. An HEAT repeat occupies 393-429 (ALVNDQLLGFVRERTLDKRWRVRKEAMMGLAQLYKKY). The residue at position 1097 (Ser-1097) is a Phosphoserine. At Lys-1146 the chain carries N6-acetyllysine. Residues 1150 to 1337 (ATGRKPYVRS…PAERQIDLQR (188 aa)) are disordered. The segment covering 1159–1180 (STGTETGSNINVNSELNPSTGN) has biased composition (polar residues). Ser-1195 carries the post-translational modification Phosphoserine. Residue Thr-1208 is modified to Phosphothreonine. Residue Lys-1211 is modified to N6-acetyllysine. Residues 1223-1233 (SDQATQGNISS) are compositionally biased toward polar residues. N6-acetyllysine is present on Lys-1290. The residue at position 1305 (Ser-1305) is a Phosphoserine. Residues 1321–1337 (DLAKKAAPAERQIDLQR) are compositionally biased toward basic and acidic residues.

It belongs to the PDS5 family. As to quaternary structure, interacts with the cohesin complex. Interacts with WAPL (via FGF motifs) or CDCA5 (via the FGF motif); the interaction is direct, cohesin-dependent and competitive. Interacts with SMC3. Interacts with TP63. As to expression, highest level in colon. Low levels in lung, ovary, breast and kidney. Reduced level in renal tumor tissue. Isoform 2 is expressed in kidney.

Its subcellular location is the nucleus. Its function is as follows. Probable regulator of sister chromatid cohesion in mitosis which may stabilize cohesin complex association with chromatin. May couple sister chromatid cohesion during mitosis to DNA replication. Cohesion ensures that chromosome partitioning is accurate in both meiotic and mitotic cells and plays an important role in DNA repair. The chain is Sister chromatid cohesion protein PDS5 homolog A from Homo sapiens (Human).